Here is a 402-residue protein sequence, read N- to C-terminus: Non-homologous end joining protein Ku (402 aa).

Residues Ile12 to Pro185 enclose the Ku domain. The disordered stretch occupies residues Gln261–Pro402. Low complexity-rich tracts occupy residues Gly299–Val308 and Val332–Thr343. Pro residues predominate over residues Pro344–Pro358. Low complexity predominate over residues Ala359–Gly376.

This sequence belongs to the prokaryotic Ku family. As to quaternary structure, homodimer. Interacts with LigD.

In terms of biological role, with LigD forms a non-homologous end joining (NHEJ) DNA repair enzyme, which repairs dsDNA breaks with reduced fidelity. Binds linear dsDNA with 5'- and 3'- overhangs but not closed circular dsDNA nor ssDNA. Recruits and stimulates the ligase activity of LigD. The polypeptide is Non-homologous end joining protein Ku (Symbiobacterium thermophilum (strain DSM 24528 / JCM 14929 / IAM 14863 / T)).